Reading from the N-terminus, the 98-residue chain is uncharacterized protein (98 aa).

The HTH cro/C1-type domain maps to 37–91 (LITSRQQLGISQKQLETLSGVKQPMIARIEKGQTNPQLETLLKLLAPLGKTLSIV). The H-T-H motif DNA-binding region spans 48–67 (QKQLETLSGVKQPMIARIEK).

This is an uncharacterized protein from Haemophilus influenzae (strain ATCC 51907 / DSM 11121 / KW20 / Rd).